We begin with the raw amino-acid sequence, 365 residues long: MAKVAKDLNPGVKKMSLGQLQSARGVACLGCKGTCSGFEPHSWRKICKSCKCSQEDHCLTSDLEDDRKIGRLLMDSKYSTLTARVKGGDGIRIYKRNRMIMTNPIATGKDPTFDTITYEWAPPGVTQKLGLQYMELIPKEKQPVTGTEGAFYRRRQLMHQLPIYDQDPSRCRGLLENELKLMEEFVKQYKSEALGVGEVALPGQGGLPKEEGKQQEKPEGAETTAATTNGSLSDPSKEVEYVCELCKGAAPPDSPVVYSDRAGYNKQWHPTCFVCAKCSEPLVDLIYFWKDGAPWCGRHYCESLRPRCSGCDEIIFAEDYQRVEDLAWHRKHFVCEGCEQLLSGRAYIVTKGQLLCPTCSKSKRS.

Serine 16 bears the Phosphoserine mark. A PET domain is found at 99–206 (MIMTNPIATG…GEVALPGQGG (108 aa)). Residues 200 to 235 (ALPGQGGLPKEEGKQQEKPEGAETTAATTNGSLSDP) are disordered. Basic and acidic residues predominate over residues 208 to 220 (PKEEGKQQEKPEG). LIM zinc-binding domains are found at residues 241–306 (YVCE…SLRP) and 307–365 (RCSG…SKRS).

As to quaternary structure, interacts with GATA1 and GATA4. Interacts with beta-dystroglycan. Interacts with GATA6. Expressed in the heart (at protein level). Expressed in many tissues with highest abundance in skeletal muscle.

Its subcellular location is the cytoplasm. The protein localises to the nucleus. Transcriptional cofactor that restricts GATA6 function by inhibiting DNA-binding, resulting in repression of GATA6 transcriptional activation of downstream target genes. Represses GATA6-mediated trans activation of lung- and cardiac tissue-specific promoters. Inhibits DNA-binding by GATA4 and GATA1 to the cTNC promoter. Plays a critical role in the development of cardiac hypertrophy via activation of calcineurin/nuclear factor of activated T-cells signaling pathway. The sequence is that of LIM and cysteine-rich domains protein 1 (LMCD1) from Homo sapiens (Human).